A 253-amino-acid polypeptide reads, in one-letter code: Ribonuclease HII (253 aa).

In terms of domain architecture, RNase H type-2 spans 30 to 221 (GPVAGVDEVG…VRRLVVDGEP (192 aa)). 3 residues coordinate a divalent metal cation: D36, E37, and D130.

This sequence belongs to the RNase HII family. Mn(2+) serves as cofactor. It depends on Mg(2+) as a cofactor.

The protein localises to the cytoplasm. It catalyses the reaction Endonucleolytic cleavage to 5'-phosphomonoester.. Endonuclease that specifically degrades the RNA of RNA-DNA hybrids. The protein is Ribonuclease HII of Mycolicibacterium gilvum (strain PYR-GCK) (Mycobacterium gilvum (strain PYR-GCK)).